Consider the following 94-residue polypeptide: uncharacterized protein (94 aa).

Positions 33-42 are enriched in polar residues; sequence INSLPTFTKP. A disordered region spans residues 33-57; sequence INSLPTFTKPNDSNNNVNKSSNDGV. Residues 43–57 are compositionally biased toward low complexity; that stretch reads NDSNNNVNKSSNDGV.

This is an uncharacterized protein from Dictyostelium discoideum (Social amoeba).